We begin with the raw amino-acid sequence, 305 residues long: Plant-type L-asparaginase (305 aa).

Thr175 functions as the Nucleophile in the catalytic mechanism. Residues Arg202 to Asp205 and Thr224 to Gly227 contribute to the substrate site.

This sequence belongs to the Ntn-hydrolase family. As to quaternary structure, heterotetramer of two alpha and two beta chains arranged as a dimer of alpha/beta heterodimers. The uncleaved protein forms homodimers. In terms of processing, autocleaved. Generates the alpha and beta subunits. The N-terminal residue of the beta subunit is thought to be responsible for the nucleophile hydrolase activity.

The catalysed reaction is L-asparagine + H2O = L-aspartate + NH4(+). Its function is as follows. Catalyzes the hydrolysis of L-asparagine into L-aspartate and ammonia. Does not exhibit glutaminase activity. This is Plant-type L-asparaginase from Pyrococcus abyssi (strain GE5 / Orsay).